A 106-amino-acid chain; its full sequence is UPF0145 protein azo0572 (106 aa).

This sequence belongs to the UPF0145 family.

The polypeptide is UPF0145 protein azo0572 (Azoarcus sp. (strain BH72)).